The primary structure comprises 368 residues: UV excision repair protein rhp23 (368 aa).

One can recognise a Ubiquitin-like domain in the interval 1 to 77 (MNLTFKNLQQ…IVCMVSRPKT (77 aa)). Composition is skewed to low complexity over residues 76–88 (KTST…AASP) and 103–124 (APSS…AAPS). A disordered region spans residues 76–134 (KTSTSTPKSAASPAPNPPASVPEKKVEAPSSTVAESTSTTQTVAAAAPSNPDTTATSEA). Residues Ser84 and Ser87 each carry the phosphoserine modification. 2 UBA domains span residues 135–185 (PIDA…LLTG) and 320–360 (QEES…LFEH). Phosphoserine is present on Ser364.

The protein localises to the nucleus. Involved in postreplication repair of UV-damaged DNA. Postreplication repair functions in gap-filling of a daughter strand on replication of damaged DNA. Functionally, protects ubiquitin chains against dissambly by deubiquitinating enzymes thereby promoting protein degradation. The chain is UV excision repair protein rhp23 (rhp23) from Schizosaccharomyces pombe (strain 972 / ATCC 24843) (Fission yeast).